A 24-amino-acid chain; its full sequence is Humanin-like 3 (24 aa).

It belongs to the humanin family. As to expression, highly expressed in testis. Also expressed in kidney, heart, skeletal muscles and brain.

Its subcellular location is the secreted. It localises to the cytoplasm. Functionally, plays a role as a neuroprotective and antiapoptotic factor. The sequence is that of Humanin-like 3 from Homo sapiens (Human).